The chain runs to 91 residues: Small ribosomal subunit protein uS15 (91 aa).

This sequence belongs to the universal ribosomal protein uS15 family. Part of the 30S ribosomal subunit. Forms a bridge to the 50S subunit in the 70S ribosome, contacting the 23S rRNA.

One of the primary rRNA binding proteins, it binds directly to 16S rRNA where it helps nucleate assembly of the platform of the 30S subunit by binding and bridging several RNA helices of the 16S rRNA. Functionally, forms an intersubunit bridge (bridge B4) with the 23S rRNA of the 50S subunit in the ribosome. The polypeptide is Small ribosomal subunit protein uS15 (Rickettsia africae (strain ESF-5)).